A 752-amino-acid polypeptide reads, in one-letter code: Palmitoyltransferase AKR1 (752 aa).

Disordered regions lie at residues 1–21 and 49–68; these read MTAE…KSDY and ASSE…LGSV. Topologically, residues 1–318 are cytoplasmic; the sequence is MTAEEVDKES…FPLPQYFSAS (318 aa). 2 stretches are compositionally biased toward basic and acidic residues: residues 9–21 and 51–68; these read ESDP…KSDY and SELK…LGSV. 6 ANK repeats span residues 72-102, 108-137, 142-171, 175-208, 212-241, and 245-274; these read PILE…DLSN, ERVS…EVNF, LDAT…DPNI, QGYN…DVDQ, HQRT…DVKN, and AGFT…DFFQ. Residues 319–339 traverse the membrane as a helical segment; sequence TGKMLTFFLPWVLIPLVFYIF. The Lumenal portion of the chain corresponds to 340–341; that stretch reads SK. The chain crosses the membrane as a helical span at residues 342-362; sequence ITFFIALLINTIVLVISGLVL. At 363 to 380 the chain is on the cytoplasmic side; that stretch reads SRLVVPSYLLSKRHPILN. A helical membrane pass occupies residues 381 to 401; the sequence is SPLLAGILSGTIAIAFFIWFT. Residues 402–412 are Lumenal-facing; it reads KISILTFTEKP. Residues 413–433 traverse the membrane as a helical segment; that stretch reads VGNIIMLGFFIGLITLFIGLM. Topologically, residues 434-509 are cytoplasmic; the sequence is KSDPGYIPGT…YNQIGLLNHK (76 aa). Positions 466-516 constitute a DHHC domain; sequence HFCVHTWIRIPLRSKYDRDSACLISAFDHFCPWVYNQIGLLNHKLFYMFVV. Cys496 acts as the S-palmitoyl cysteine intermediate in catalysis. The helical transmembrane segment at 510 to 530 threads the bilayer; it reads LFYMFVVLLEISVWWFLPLMM. Topologically, residues 531–567 are lumenal; sequence EYFDELEDYLENRKGKHFGDCHFLGDEDLCFGLHHDT. A helical transmembrane segment spans residues 568-588; sequence FNFLLLCWVIFQAFWVLCLIA. The Cytoplasmic segment spans residues 589–752; sequence VQTVQMLKGV…TLPNATEELV (164 aa).

It belongs to the DHHC palmitoyltransferase family. AKR/ZDHHC17 subfamily.

The protein localises to the early endosome membrane. Its subcellular location is the golgi apparatus membrane. It carries out the reaction L-cysteinyl-[protein] + hexadecanoyl-CoA = S-hexadecanoyl-L-cysteinyl-[protein] + CoA. Functionally, palmitoyltransferase specific for casein kinase 1. This is Palmitoyltransferase AKR1 (AKR1) from Kluyveromyces lactis (strain ATCC 8585 / CBS 2359 / DSM 70799 / NBRC 1267 / NRRL Y-1140 / WM37) (Yeast).